We begin with the raw amino-acid sequence, 103 residues long: Co-chaperonin GroES (103 aa).

It belongs to the GroES chaperonin family. Heptamer of 7 subunits arranged in a ring. Interacts with the chaperonin GroEL.

It is found in the cytoplasm. Its function is as follows. Together with the chaperonin GroEL, plays an essential role in assisting protein folding. The GroEL-GroES system forms a nano-cage that allows encapsulation of the non-native substrate proteins and provides a physical environment optimized to promote and accelerate protein folding. GroES binds to the apical surface of the GroEL ring, thereby capping the opening of the GroEL channel. This chain is Co-chaperonin GroES, found in Picosynechococcus sp. (strain ATCC 27264 / PCC 7002 / PR-6) (Agmenellum quadruplicatum).